Here is a 1464-residue protein sequence, read N- to C-terminus: Gag-Pol polyprotein (1464 aa).

Residue glycine 2 is the site of N-myristoyl glycine; by host attachment. The interval 7–31 is interaction with Gp41; that stretch reads VLRGKKADELERIRLRPGGKKKYRL. Positions 16–22 match the Nuclear export signal motif; that stretch reads LERIRLR. Residues 26-32 carry the Nuclear localization signal motif; that stretch reads KKKYRLK. The interval 111–136 is disordered; it reads ETGTAEKMPSTSRPTAPSSEKGGNYP. A compositionally biased stretch (polar residues) spans 119–128; the sequence is PSTSRPTAPS. Tyrosine 135 is modified (phosphotyrosine; by host). Positions 191–228 are interaction with human PPIA/CYPA and NUP153; the sequence is NCVGDHQAAMQIIREIINEEAAEWDVQHPIPGPLPAGQ. Positions 279–365 are dimerization/Multimerization of capsid protein p24; it reads YNPTNILDIK…GGPGQKARLM (87 aa). CCHC-type zinc fingers lie at residues 389–406 and 410–427; these read FKCW…QCRA and QGCW…NCPD. The segment at 432–500 is disordered; it reads FLRTGPLGKE…RGLTAPRAGG (69 aa). The span at 456–469 shows a compositional bias: low complexity; sequence TNSTPSGSSSGSTG. A compositionally biased stretch (basic and acidic residues) spans 473 to 485; sequence AAREKTERAERET. The interval 514–518 is dimerization of protease; that stretch reads PQFSL. Residues 533–602 enclose the Peptidase A2 domain; the sequence is VEVLLDTGAD…TPINIFGRNI (70 aa). Residue aspartate 538 is the For protease activity; shared with dimeric partner of the active site. 2 dimerization of protease regions span residues 562-568 and 601-613; these read GIGGFIN and NILT…LNLP. In terms of domain architecture, Reverse transcriptase spans 656 to 846; sequence EGQLEEAPPT…PPYHWMGYEL (191 aa). 3 residues coordinate Mg(2+): aspartate 722, aspartate 797, and aspartate 798. The interval 839–847 is RT 'primer grip'; it reads YHWMGYELW. The Tryptophan repeat motif signature appears at 1009–1025; it reads WEQWWDNYWQVTWIPDW. The region spanning 1045–1168 is the RNase H type-1 domain; it reads IPGAETFYTD…VDHLVSQGIR (124 aa). Mg(2+)-binding residues include aspartate 1054, glutamate 1089, aspartate 1109, and aspartate 1160. Residues 1174 to 1215 form an Integrase-type zinc finger; sequence EKIEPAQEEHEKYHSNVKELSHKFGIPNLVARQIVNSCAQCQ. Residues histidine 1183, histidine 1187, cysteine 1211, and cysteine 1214 each coordinate Zn(2+). The Integrase catalytic domain maps to 1224–1375; sequence QVNAELGTWQ…TPSERLINMI (152 aa). Aspartate 1235, aspartate 1287, and glutamate 1323 together coordinate Mg(2+). The segment at residues 1394-1441 is a DNA-binding region (integrase-type); that stretch reads FRVYFREGRDQLWKGPGELLWKGEGAVLVKVGTDIKIIPRRKAKIIRD.

As to quaternary structure, homotrimer; further assembles as hexamers of trimers. Interacts with gp41 (via C-terminus). Interacts with host CALM1; this interaction induces a conformational change in the Matrix protein, triggering exposure of the myristate group. Interacts with host AP3D1; this interaction allows the polyprotein trafficking to multivesicular bodies during virus assembly. Part of the pre-integration complex (PIC) which is composed of viral genome, matrix protein, Vpr and integrase. Homodimer; the homodimer further multimerizes as homohexamers or homopentamers. Interacts with human PPIA/CYPA. Interacts with human NUP153. Interacts with host PDZD8; this interaction stabilizes the capsid. Interacts with monkey TRIM5; this interaction destabilizes the capsid. In terms of assembly, homodimer, whose active site consists of two apposed aspartic acid residues. As to quaternary structure, heterodimer of p66 RT and p51 RT (RT p66/p51). Heterodimerization of RT is essential for DNA polymerase activity. The overall folding of the subdomains is similar in p66 RT and p51 RT but the spatial arrangements of the subdomains are dramatically different. Homotetramer; may further associate as a homohexadecamer. Part of the pre-integration complex (PIC) which is composed of viral genome, matrix protein, Vpr and integrase. Interacts with human SMARCB1/INI1 and human PSIP1/LEDGF isoform 1. Interacts with human KPNA3; this interaction might play a role in nuclear import of the pre-integration complex. Interacts with human NUP153; this interaction might play a role in nuclear import of the pre-integration complex. It depends on Mg(2+) as a cofactor. Post-translationally, specific enzymatic cleavages by the viral protease yield mature proteins. The protease is released by autocatalytic cleavage. The polyprotein is cleaved during and after budding, this process is termed maturation. Proteolytic cleavage of p66 RT removes the RNase H domain to yield the p51 RT subunit. Nucleocapsid protein p7 might be further cleaved after virus entry.

Its subcellular location is the host cell membrane. It is found in the host endosome. The protein localises to the host multivesicular body. It localises to the virion membrane. The protein resides in the host nucleus. Its subcellular location is the host cytoplasm. It is found in the virion. The enzyme catalyses Endopeptidase for which the P1 residue is preferably hydrophobic.. It catalyses the reaction Endohydrolysis of RNA in RNA/DNA hybrids. Three different cleavage modes: 1. sequence-specific internal cleavage of RNA. Human immunodeficiency virus type 1 and Moloney murine leukemia virus enzymes prefer to cleave the RNA strand one nucleotide away from the RNA-DNA junction. 2. RNA 5'-end directed cleavage 13-19 nucleotides from the RNA end. 3. DNA 3'-end directed cleavage 15-20 nucleotides away from the primer terminus.. It carries out the reaction 3'-end directed exonucleolytic cleavage of viral RNA-DNA hybrid.. The catalysed reaction is DNA(n) + a 2'-deoxyribonucleoside 5'-triphosphate = DNA(n+1) + diphosphate. With respect to regulation, protease: The viral protease is inhibited by many synthetic protease inhibitors (PIs), such as amprenavir, atazanavir, indinavir, loprinavir, nelfinavir, ritonavir and saquinavir. Use of protease inhibitors in tritherapy regimens permit more ambitious therapeutic strategies. Reverse transcriptase/ribonuclease H: RT can be inhibited either by nucleoside RT inhibitors (NRTIs) or by non nucleoside RT inhibitors (NNRTIs). NRTIs act as chain terminators, whereas NNRTIs inhibit DNA polymerization by binding a small hydrophobic pocket near the RT active site and inducing an allosteric change in this region. Classical NRTIs are abacavir, adefovir (PMEA), didanosine (ddI), lamivudine (3TC), stavudine (d4T), tenofovir (PMPA), zalcitabine (ddC), and zidovudine (AZT). Classical NNRTIs are atevirdine (BHAP U-87201E), delavirdine, efavirenz (DMP-266), emivirine (I-EBU), and nevirapine (BI-RG-587). The tritherapies used as a basic effective treatment of AIDS associate two NRTIs and one NNRTI. Functionally, mediates, with Gag polyprotein, the essential events in virion assembly, including binding the plasma membrane, making the protein-protein interactions necessary to create spherical particles, recruiting the viral Env proteins, and packaging the genomic RNA via direct interactions with the RNA packaging sequence (Psi). Gag-Pol polyprotein may regulate its own translation, by the binding genomic RNA in the 5'-UTR. At low concentration, the polyprotein would promote translation, whereas at high concentration, the polyprotein would encapsidate genomic RNA and then shut off translation. Its function is as follows. Targets the polyprotein to the plasma membrane via a multipartite membrane-binding signal, that includes its myristoylated N-terminus. Matrix protein is part of the pre-integration complex. Implicated in the release from host cell mediated by Vpu. Binds to RNA. In terms of biological role, forms the conical core that encapsulates the genomic RNA-nucleocapsid complex in the virion. Most core are conical, with only 7% tubular. The core is constituted by capsid protein hexamer subunits. The core is disassembled soon after virion entry. Host restriction factors such as TRIM5-alpha or TRIMCyp bind retroviral capsids and cause premature capsid disassembly, leading to blocks in reverse transcription. Capsid restriction by TRIM5 is one of the factors which restricts HIV-1 to the human species. Host PIN1 apparently facilitates the virion uncoating. On the other hand, interactions with PDZD8 or CYPA stabilize the capsid. Encapsulates and protects viral dimeric unspliced genomic RNA (gRNA). Binds these RNAs through its zinc fingers. Acts as a nucleic acid chaperone which is involved in rearangement of nucleic acid secondary structure during gRNA retrotranscription. Also facilitates template switch leading to recombination. As part of the polyprotein, participates in gRNA dimerization, packaging, tRNA incorporation and virion assembly. Functionally, aspartyl protease that mediates proteolytic cleavages of Gag and Gag-Pol polyproteins during or shortly after the release of the virion from the plasma membrane. Cleavages take place as an ordered, step-wise cascade to yield mature proteins. This process is called maturation. Displays maximal activity during the budding process just prior to particle release from the cell. Also cleaves Nef and Vif, probably concomitantly with viral structural proteins on maturation of virus particles. Hydrolyzes host EIF4GI and PABP1 in order to shut off the capped cellular mRNA translation. The resulting inhibition of cellular protein synthesis serves to ensure maximal viral gene expression and to evade host immune response. Its function is as follows. Multifunctional enzyme that converts the viral RNA genome into dsDNA in the cytoplasm, shortly after virus entry into the cell. This enzyme displays a DNA polymerase activity that can copy either DNA or RNA templates, and a ribonuclease H (RNase H) activity that cleaves the RNA strand of RNA-DNA heteroduplexes in a partially processive 3' to 5' endonucleasic mode. Conversion of viral genomic RNA into dsDNA requires many steps. A tRNA(3)-Lys binds to the primer-binding site (PBS) situated at the 5'-end of the viral RNA. RT uses the 3' end of the tRNA primer to perform a short round of RNA-dependent minus-strand DNA synthesis. The reading proceeds through the U5 region and ends after the repeated (R) region which is present at both ends of viral RNA. The portion of the RNA-DNA heteroduplex is digested by the RNase H, resulting in a ssDNA product attached to the tRNA primer. This ssDNA/tRNA hybridizes with the identical R region situated at the 3' end of viral RNA. This template exchange, known as minus-strand DNA strong stop transfer, can be either intra- or intermolecular. RT uses the 3' end of this newly synthesized short ssDNA to perform the RNA-dependent minus-strand DNA synthesis of the whole template. RNase H digests the RNA template except for two polypurine tracts (PPTs) situated at the 5'-end and near the center of the genome. It is not clear if both polymerase and RNase H activities are simultaneous. RNase H probably can proceed both in a polymerase-dependent (RNA cut into small fragments by the same RT performing DNA synthesis) and a polymerase-independent mode (cleavage of remaining RNA fragments by free RTs). Secondly, RT performs DNA-directed plus-strand DNA synthesis using the PPTs that have not been removed by RNase H as primers. PPTs and tRNA primers are then removed by RNase H. The 3' and 5' ssDNA PBS regions hybridize to form a circular dsDNA intermediate. Strand displacement synthesis by RT to the PBS and PPT ends produces a blunt ended, linear dsDNA copy of the viral genome that includes long terminal repeats (LTRs) at both ends. In terms of biological role, catalyzes viral DNA integration into the host chromosome, by performing a series of DNA cutting and joining reactions. This enzyme activity takes place after virion entry into a cell and reverse transcription of the RNA genome in dsDNA. The first step in the integration process is 3' processing. This step requires a complex comprising the viral genome, matrix protein, Vpr and integrase. This complex is called the pre-integration complex (PIC). The integrase protein removes 2 nucleotides from each 3' end of the viral DNA, leaving recessed CA OH's at the 3' ends. In the second step, the PIC enters cell nucleus. This process is mediated through integrase and Vpr proteins, and allows the virus to infect a non dividing cell. This ability to enter the nucleus is specific of lentiviruses, other retroviruses cannot and rely on cell division to access cell chromosomes. In the third step, termed strand transfer, the integrase protein joins the previously processed 3' ends to the 5' ends of strands of target cellular DNA at the site of integration. The 5'-ends are produced by integrase-catalyzed staggered cuts, 5 bp apart. A Y-shaped, gapped, recombination intermediate results, with the 5'-ends of the viral DNA strands and the 3' ends of target DNA strands remaining unjoined, flanking a gap of 5 bp. The last step is viral DNA integration into host chromosome. This involves host DNA repair synthesis in which the 5 bp gaps between the unjoined strands are filled in and then ligated. Since this process occurs at both cuts flanking the HIV genome, a 5 bp duplication of host DNA is produced at the ends of HIV-1 integration. Alternatively, Integrase may catalyze the excision of viral DNA just after strand transfer, this is termed disintegration. This is Gag-Pol polyprotein (gag-pol) from Homo sapiens (Human).